A 416-amino-acid chain; its full sequence is Tumor necrosis factor receptor superfamily member 19 (416 aa).

An N-terminal signal peptide occupies residues 1–29 (MALKVLPLHRTVLFAAILFLLHLACKVSC). Topologically, residues 30-170 (ETGDCRQQEF…TVSSPRDTAL (141 aa)) are extracellular. TNFR-Cys repeat units follow at residues 33 to 72 (DCRQQEFKDRSGNCVLCKQCGPGMELSKECGFGYGEDAQC) and 74 to 114 (PCRP…DAVC). 8 disulfides stabilise this stretch: Cys34/Cys46, Cys49/Cys62, Cys52/Cys72, Cys75/Cys89, Cys92/Cys106, Cys95/Cys114, Cys117/Cys135, and Cys138/Cys149. The N-linked (GlcNAc...) asparagine glycan is linked to Asn105. The stretch at 116 to 149 (DCLPGFYRKTKLVGFQDMECVPCGDPPPPYEPHC) is one TNFR-Cys 3; truncated repeat. The chain crosses the membrane as a helical span at residues 171–191 (AAVICSALATVLLALLILCVI). The Cytoplasmic segment spans residues 192–416 (YCKRQFMEKK…LAMPTAFQDA (225 aa)). The interval 321–416 (LCDSYPELTG…LAMPTAFQDA (96 aa)) is disordered. Composition is skewed to polar residues over residues 331–351 (EDTNSLNPENESAASLDSSGG), 360–370 (LESSGNVSEST), and 381–396 (VWEQTLAQDAQRTPSQ).

As to quaternary structure, associates with TRAF1, TRAF2, TRAF3 and TRAF5. Interacts with LINGO1. In terms of tissue distribution, highly expressed in adult brain, and in embryos from day 11-17, but not earlier. Detected in embryonic brain and epithelium, and at lower levels in adult heart, lung and liver. In neonatal mice, mainly in hair follicles and neuron-like cells in the cerebellum, but not in the skin epidermis. Isoform 3 was found in embryonic day 17.5 skin but not in brain and liver.

It localises to the cell membrane. The protein resides in the secreted. Its function is as follows. Can mediate activation of c-Jun and NF-kappa-B. May promote caspase-independent cell death. Isoform 2 and isoform 3 may act as decoy receptors. The sequence is that of Tumor necrosis factor receptor superfamily member 19 (Tnfrsf19) from Mus musculus (Mouse).